The chain runs to 230 residues: MSPSQSPSVAQVQIESHVFPPTVKPPGTSKPFFLGGAGERGLEIQGKFIKFTAIGVYLEDSAIPSLAVKWKGKTAEELTDSVDFFRDIVSGPFEKFTQVTMILPLTGQQYSEKVTENCVAYWKAVGTYTDAEAKAIEKFIEVFKDETFPPGGSILFTQSPLGSLTIAFSKDGSLPETGTVVMENKQLSEAVLESIIGKHGVSPAAKKSLAARMSELLKEKPEAQTAAAAE.

Substrate-binding residues include Thr52, Asn117, and Ser194.

This sequence belongs to the chalcone isomerase family.

It carries out the reaction a chalcone = a flavanone.. The protein operates within secondary metabolite biosynthesis; flavonoid biosynthesis. Functionally, catalyzes the intramolecular cyclization of bicyclic chalcones into tricyclic (S)-flavanones. Responsible for the isomerization of 4,2',4',6'-tetrahydroxychalcone (also termed chalcone) into naringenin. The polypeptide is Chalcone--flavanone isomerase (CHI) (Camellia sinensis (Tea plant)).